Here is a 237-residue protein sequence, read N- to C-terminus: MNRIRFISLILNLDSCDSNIQEYSRLAYVHDLNKLMDENFVSLLLIILKLAKNSKRLQPTYHNVYLFNLLKSYALSEIDGYVLGHFSRGFVNTLMHYKNAQYETLESLLSANNFFEANKFTQQILLELAGEQSKQRNWMYFTDVHSINHQSVSDLNHLWELYSQGNFGFSIQKRIWISVNKNWKKFWKKIGWINSNSKWLKYPGEFMWAVNAPPGHLPLFNQLRGVYVLEFIFDYYL.

This sequence belongs to the ycf53 family.

Its subcellular location is the plastid. It is found in the chloroplast. This is an uncharacterized protein from Cyanidium caldarium (Red alga).